The following is an 860-amino-acid chain: DNA mismatch repair protein MutS (860 aa).

ATP is bound at residue 620 to 627; it reads GPNMGGKS.

It belongs to the DNA mismatch repair MutS family.

Functionally, this protein is involved in the repair of mismatches in DNA. It is possible that it carries out the mismatch recognition step. This protein has a weak ATPase activity. The chain is DNA mismatch repair protein MutS from Dechloromonas aromatica (strain RCB).